The following is a 148-amino-acid chain: Ribonuclease pancreatic (148 aa).

The first 25 residues, 1–25 (MGLEKSLILLPLLVLVFGWVQSSLG), serve as a signal peptide directing secretion. 2 residues coordinate substrate: lysine 32 and arginine 35. Histidine 36 functions as the Proton acceptor in the catalytic mechanism. Disulfide bonds link cysteine 50–cysteine 108, cysteine 64–cysteine 119, cysteine 82–cysteine 134, and cysteine 89–cysteine 96. Residue asparagine 58 is glycosylated (N-linked (GlcNAc...) asparagine). 65 to 69 (KPVNT) contributes to the substrate binding site. N-linked (GlcNAc...) asparagine glycosylation is present at asparagine 86. Substrate is bound by residues lysine 90 and arginine 109. The active-site Proton donor is the histidine 143.

This sequence belongs to the pancreatic ribonuclease family. As to quaternary structure, monomer. Interacts with and forms tight 1:1 complexes with RNH1. Dimerization of two such complexes may occur. Interaction with RNH1 inhibits this protein. Pancreas.

It is found in the secreted. It carries out the reaction an [RNA] containing cytidine + H2O = an [RNA]-3'-cytidine-3'-phosphate + a 5'-hydroxy-ribonucleotide-3'-[RNA].. It catalyses the reaction an [RNA] containing uridine + H2O = an [RNA]-3'-uridine-3'-phosphate + a 5'-hydroxy-ribonucleotide-3'-[RNA].. In terms of biological role, endonuclease that catalyzes the cleavage of RNA on the 3' side of pyrimidine nucleotides. Acts on single-stranded and double-stranded RNA. The chain is Ribonuclease pancreatic (RNASE1) from Chionomys nivalis (European snow vole).